Consider the following 168-residue polypeptide: Peptide deformylase 1 (168 aa).

The Fe cation site is built by cysteine 91 and histidine 133. Glutamate 134 is a catalytic residue. Residue histidine 137 participates in Fe cation binding.

Belongs to the polypeptide deformylase family. Fe(2+) serves as cofactor.

The catalysed reaction is N-terminal N-formyl-L-methionyl-[peptide] + H2O = N-terminal L-methionyl-[peptide] + formate. Functionally, removes the formyl group from the N-terminal Met of newly synthesized proteins. Requires at least a dipeptide for an efficient rate of reaction. N-terminal L-methionine is a prerequisite for activity but the enzyme has broad specificity at other positions. The polypeptide is Peptide deformylase 1 (Shewanella oneidensis (strain ATCC 700550 / JCM 31522 / CIP 106686 / LMG 19005 / NCIMB 14063 / MR-1)).